Consider the following 309-residue polypeptide: MLRSLLQSGHRRVVASSCATMVRCSSSSTSALAYKQMHRHATRPPLPTLDTPSWNANSAVSSIIYETPAPSRQPRKQHVLNCLVQNEPGVLSRVSGTLAARGFNIDSLVVCNTEVKDLSRMTIVLQGQDGVVEQARRQIEDLVPVYAVLDYTNSEIIKRELVMARISLLGTEYFEDLLLHHHTSTNAGAADSQELVAEIREKQFHPANLPASEVLRLKHEHLNDITNLTNNFGGRVVDISETSCIVELSAKPTRISAFLKLVEPFGVLECARSGMMALPRTPLKTSTEEAADEDEKISEIVDISQLPPG.

A mitochondrion-targeting transit peptide spans 1-24 (MLRSLLQSGHRRVVASSCATMVRC). One can recognise an ACT domain in the interval 79-159 (VLNCLVQNEP…DYTNSEIIKR (81 aa)).

Belongs to the acetolactate synthase small subunit family. As to quaternary structure, the acetolactate synthase complex contains the catalytic regulatory subunit ILV2 and the regulatory small subunit ILV6.

It is found in the mitochondrion. It functions in the pathway amino-acid biosynthesis; L-isoleucine biosynthesis; L-isoleucine from 2-oxobutanoate: step 1/4. It participates in amino-acid biosynthesis; L-valine biosynthesis; L-valine from pyruvate: step 1/4. Functionally, regulatory subunit of mitochondrial acetolactate synthase, which catalyzes the first of a series of common steps in the biosynthesis of the branched-chain amino acids. Stimulates activity of the acetolactate synthase catalytic subunit ILV2 seven- to tenfold and confers sensitivity to inhibition by valine and activation by ATP. This is Acetolactate synthase small subunit, mitochondrial (ILV6) from Saccharomyces cerevisiae (strain ATCC 204508 / S288c) (Baker's yeast).